The chain runs to 211 residues: Large ribosomal subunit protein uL4 (211 aa).

Positions 44–90 (ERQGTHSTLTKGEVRGGGKKPWRQKHTGKARTGSTRNPHWTGGGVVF) are disordered. The segment covering 60–72 (GGKKPWRQKHTGK) has biased composition (basic residues).

It belongs to the universal ribosomal protein uL4 family. In terms of assembly, part of the 50S ribosomal subunit.

In terms of biological role, one of the primary rRNA binding proteins, this protein initially binds near the 5'-end of the 23S rRNA. It is important during the early stages of 50S assembly. It makes multiple contacts with different domains of the 23S rRNA in the assembled 50S subunit and ribosome. Its function is as follows. Forms part of the polypeptide exit tunnel. This is Large ribosomal subunit protein uL4 from Ureaplasma parvum serovar 3 (strain ATCC 27815 / 27 / NCTC 11736).